Reading from the N-terminus, the 331-residue chain is uncharacterized protein (331 aa).

Disordered stretches follow at residues 131–163 and 190–209; these read ISHA…KKRS and DEQK…VQSS. Over residues 140–162 the composition is skewed to basic residues; it reads RPKPTKPRASRKRAAIAQSKKKR. Residues 195–209 are compositionally biased toward polar residues; the sequence is RQSTSQPDKEIVQSS.

This is an uncharacterized protein from Caenorhabditis elegans.